The chain runs to 207 residues: MEDPDLVATNLSPAGVKDLLRKDLDARDPWNISSCEYEQKRLHAIMELCLGGRTLGDVLEIGCAAGALTERLSIYSQSLTVVELMTEAIAKAQERVNNSDIIWHEQDVCQMDLNAKYDTIICTEVLYYIHEKERLRGALENIVQLLRSDGQFIFGSPRNAVCRSWGHLFGAEAVLELAQSRLRIVDLRRINGGLPGQDCVIAKLTRR.

It belongs to the NodS family.

Its function is as follows. SAM-utilizing methyltransferase involved in nod factor synthesis. The polypeptide is Nodulation protein S (nodS) (Azorhizobium caulinodans (strain ATCC 43989 / DSM 5975 / JCM 20966 / LMG 6465 / NBRC 14845 / NCIMB 13405 / ORS 571)).